The chain runs to 341 residues: Cysteine-rich repeat secretory protein 1 (341 aa).

A signal peptide spans 1-25; that stretch reads MFSLPLHQSKLIFLLSFLLIKTLNA. Gnk2-homologous domains are found at residues 28-131 and 136-245; these read TYLL…SRKI and DQGP…ATFL. Cystine bridges form between Cys85/Cys94, Cys97/Cys122, Cys199/Cys208, and Cys211/Cys236. A compositionally biased stretch (pro residues) spans 247-262; it reads PPPPPPPPPPPPPPPQ. Residues 247 to 274 form a disordered region; that stretch reads PPPPPPPPPPPPPPPQRLYGENDTPSSD.

It belongs to the cysteine-rich repeat secretory protein family.

The protein localises to the secreted. The sequence is that of Cysteine-rich repeat secretory protein 1 (CRRSP1) from Arabidopsis thaliana (Mouse-ear cress).